A 418-amino-acid chain; its full sequence is Protease LasA (418 aa).

The first 31 residues, 1–31, serve as a signal peptide directing secretion; that stretch reads MQHKRSRAMASPRSPFLFVLLALAVGGTANA. The propeptide occupies 32-236; that stretch reads HDDGLPAFRY…ARQLQAKAAL (205 aa). Zn(2+) is bound by residues His259 and Asp272. Cysteines 301 and 347 form a disulfide. Active-site proton donor/acceptor residues include His317 and His356. His358 is a binding site for Zn(2+). Residues Cys391 and Cys406 are joined by a disulfide bond.

It belongs to the peptidase M23A family. Requires Zn(2+) as cofactor. In terms of processing, processing of pro-LasA can occur extracellularly and requires elastase (lasB). Secretion and processing may be linked.

The protein localises to the secreted. Its function is as follows. Involved in proteolysis and elastolysis (degradation of the host protein elastin). Has staphylolytic activity (degrades pentaglycine cross-links in cell wall peptidoglycan), preferring Gly-Gly-|-X substrates where X is Ala or Gly. Enhances the elastolytic but not proteolytic activity of elastase (lasB) and elastolytic activity of other proteases. Degradation of host elastin is likely to contribute to the pathogenicity of P.aeruginosa. While either His-317 or His-356 can abstract a proton in the hydrolysis reaction, the same residue performs both functions in a given catalytic cycle, with the other stabilizing the catalytic intermediate. This chain is Protease LasA (lasA), found in Pseudomonas aeruginosa (strain ATCC 15692 / DSM 22644 / CIP 104116 / JCM 14847 / LMG 12228 / 1C / PRS 101 / PAO1).